The following is a 426-amino-acid chain: Serine--tRNA ligase (426 aa).

Thr-227–Glu-229 provides a ligand contact to L-serine. ATP-binding positions include Arg-258–Glu-260 and Val-274. Glu-281 contacts L-serine. Glu-345 to Ser-348 is a binding site for ATP. An L-serine-binding site is contributed by Thr-380.

The protein belongs to the class-II aminoacyl-tRNA synthetase family. Type-1 seryl-tRNA synthetase subfamily. In terms of assembly, homodimer. The tRNA molecule binds across the dimer.

It localises to the cytoplasm. The catalysed reaction is tRNA(Ser) + L-serine + ATP = L-seryl-tRNA(Ser) + AMP + diphosphate + H(+). The enzyme catalyses tRNA(Sec) + L-serine + ATP = L-seryl-tRNA(Sec) + AMP + diphosphate + H(+). It participates in aminoacyl-tRNA biosynthesis; selenocysteinyl-tRNA(Sec) biosynthesis; L-seryl-tRNA(Sec) from L-serine and tRNA(Sec): step 1/1. Its function is as follows. Catalyzes the attachment of serine to tRNA(Ser). Is also able to aminoacylate tRNA(Sec) with serine, to form the misacylated tRNA L-seryl-tRNA(Sec), which will be further converted into selenocysteinyl-tRNA(Sec). In Clavibacter michiganensis subsp. michiganensis (strain NCPPB 382), this protein is Serine--tRNA ligase.